Reading from the N-terminus, the 286-residue chain is uncharacterized protein (286 aa).

The 243-residue stretch at 26–268 (PLIILCHGFC…DACHYDIYEG (243 aa)) folds into the AB hydrolase-1 domain.

To E.coli YcjY.

This is an uncharacterized protein from Escherichia coli.